The chain runs to 878 residues: AP-2 complex subunit alpha (878 aa).

This sequence belongs to the adaptor complexes large subunit family. Adaptor protein complex 2 (AP-2) is a heterotetramer composed of two large adaptins (alpha-type subunit apl3 and beta-type subunit apl1), a medium chain (mu-type subunit apm4) and a small adaptin (sigma-type subunit aps2).

Its subcellular location is the cell membrane. It localises to the membrane. The protein localises to the coated pit. Functionally, adaptins are components of the adaptor complexes which link clathrin to receptors in coated vesicles. Clathrin-associated protein complexes are believed to interact with the cytoplasmic tails of membrane proteins, leading to their selection and concentration. Alpha adaptin is a subunit of the plasma membrane adaptor. This is AP-2 complex subunit alpha (apl3) from Schizosaccharomyces pombe (strain 972 / ATCC 24843) (Fission yeast).